The sequence spans 280 residues: Nitrogenase iron protein (280 aa).

9-16 (GKGGIGKS) is an ATP binding site. Position 97 (C97) interacts with [4Fe-4S] cluster. R100 carries the post-translational modification ADP-ribosylarginine; by dinitrogenase reductase ADP-ribosyltransferase. C132 contributes to the [4Fe-4S] cluster binding site.

The protein belongs to the NifH/BchL/ChlL family. In terms of assembly, homodimer. [4Fe-4S] cluster serves as cofactor. Post-translationally, the reversible ADP-ribosylation of Arg-100 inactivates the nitrogenase reductase and regulates nitrogenase activity.

It carries out the reaction N2 + 8 reduced [2Fe-2S]-[ferredoxin] + 16 ATP + 16 H2O = H2 + 8 oxidized [2Fe-2S]-[ferredoxin] + 2 NH4(+) + 16 ADP + 16 phosphate + 6 H(+). Functionally, the key enzymatic reactions in nitrogen fixation are catalyzed by the nitrogenase complex, which has 2 components: the iron protein and the molybdenum-iron protein. The sequence is that of Nitrogenase iron protein from Desulforudis audaxviator (strain MP104C).